The primary structure comprises 302 residues: Aspartate carbamoyltransferase catalytic subunit (302 aa).

2 residues coordinate carbamoyl phosphate: Arg51 and Thr52. Position 80 (Lys80) interacts with L-aspartate. Arg101, His129, and Gln132 together coordinate carbamoyl phosphate. L-aspartate contacts are provided by Arg162 and Arg223. The carbamoyl phosphate site is built by Leu261 and Pro262.

Belongs to the aspartate/ornithine carbamoyltransferase superfamily. ATCase family. Heterododecamer (2C3:3R2) of six catalytic PyrB chains organized as two trimers (C3), and six regulatory PyrI chains organized as three dimers (R2).

The enzyme catalyses carbamoyl phosphate + L-aspartate = N-carbamoyl-L-aspartate + phosphate + H(+). It functions in the pathway pyrimidine metabolism; UMP biosynthesis via de novo pathway; (S)-dihydroorotate from bicarbonate: step 2/3. Catalyzes the condensation of carbamoyl phosphate and aspartate to form carbamoyl aspartate and inorganic phosphate, the committed step in the de novo pyrimidine nucleotide biosynthesis pathway. The chain is Aspartate carbamoyltransferase catalytic subunit from Chromobacterium violaceum (strain ATCC 12472 / DSM 30191 / JCM 1249 / CCUG 213 / NBRC 12614 / NCIMB 9131 / NCTC 9757 / MK).